An 836-amino-acid chain; its full sequence is V-type proton ATPase subunit C (836 aa).

Over residues 116 to 144 the composition is skewed to basic residues; it reads LSLRHQRKHQHTHHQNKPQHYHHHHHHHQ. 4 disordered regions span residues 116–169, 302–403, 415–453, and 496–544; these read LSLR…ASAP, APTT…SVQS, KPKRNSKKSSAQQQHETAQLQHQQTTQQHATPLTPQNHN, and PSQL…PLSP. The span at 160 to 169 shows a compositional bias: pro residues; it reads ATPPAPASAP. The span at 302–316 shows a compositional bias: low complexity; it reads APTTSSSVHSSMSRS. Polar residues-rich tracts occupy residues 319 to 348 and 364 to 374; these read KRLNNNTCSINNNKLSFRSGSHVSQLHLAT and TNPLQSPVQKS. Low complexity predominate over residues 425–450; the sequence is AQQQHETAQLQHQQTTQQHATPLTPQ. Polar residues predominate over residues 496–511; sequence PSQLNINNGFNLTPTH. The segment covering 512–529 has biased composition (low complexity); it reads RSSPVSSCCGSSSQGRSS.

This sequence belongs to the V-ATPase C subunit family. V-ATPase is a heteromultimeric enzyme made up of two complexes: the ATP-hydrolytic V1 complex and the proton translocation V0 complex. The V1 complex consists of three catalytic AB heterodimers that form a heterohexamer, three peripheral stalks each consisting of EG heterodimers, one central rotor including subunits D and F, and the regulatory subunits C and H. The proton translocation complex V0 consists of the proton transport subunit a, a ring of proteolipid subunits c9c'', rotary subunit d, subunits e and f, and the accessory subunits VhaAC45 and ATP6AP2. As to expression, in larvae, expressed in the ring gland, CNS, imaginal disks and lymph gland.

Subunit of the V1 complex of vacuolar(H+)-ATPase (V-ATPase), a multisubunit enzyme composed of a peripheral complex (V1) that hydrolyzes ATP and a membrane integral complex (V0) that translocates protons. V-ATPase is responsible for acidifying and maintaining the pH of intracellular compartments and in some cell types, is targeted to the plasma membrane, where it is responsible for acidifying the extracellular environment. Subunit C is necessary for the assembly of the catalytic sector of the enzyme and is likely to have a specific function in its catalytic activity. In enterocytes, acts as part of a pHCl-2 sensory pathway which mediates Tor-dependent larval growth and metabolism in response to zinc availability. Likely acts in maintaining enterocyte lysosomal acidification which consequently promotes Tor activation at the lysosome membrane. The sequence is that of V-type proton ATPase subunit C (Vha44) from Drosophila melanogaster (Fruit fly).